The following is a 412-amino-acid chain: MAENLKGCSVCCKSSWNQLQDLCRLAKLSCPALGVSKKNLYDFEVEYLCDYKKIREQEYYLVKWRGYPDSENTWEPRQNLKCIRVLKQFHKDLERELVRRHRRSKPPRHLDPNLANYLVQKAKQRRALQRWEQELNAKRSHLGRITVENEVDLDGPPRSFVYINEYRVGEGITLNQVAVGCECQDCLLAPTGGCCPGASLHKFAYNDQGQVRLKAGQPIYECNSRCCCGYDCPNRVVQKGIRYDLCIFRTNDGRGWGVRTLEKIRKNSFVMEYVGEIITSEEAERRGQIYDRQGATYLFDLDYVEDVYTVDAAYYGNISHFVNHSCDPNLQVYNVFIDNLDERLPRIAFFATRTIWAGEELTFDYNMQVDPVDMESTRMDSNFGLAGLPGSPKKRVRIECKCGTTACRKYLF.

An interaction with SIRT1 region spans residues 1–89 (MAENLKGCSV…LKCIRVLKQF (89 aa)). The 59-residue stretch at 43 to 101 (FEVEYLCDYKKIREQEYYLVKWRGYPDSENTWEPRQNLKCIRVLKQFHKDLERELVRRH) folds into the Chromo domain. The region spanning 179–240 (VGCECQDCLL…DCPNRVVQKG (62 aa)) is the Pre-SET domain. Cysteine 181, cysteine 183, cysteine 186, cysteine 194, cysteine 195, cysteine 222, cysteine 226, cysteine 228, and cysteine 232 together coordinate Zn(2+). Residues 243–366 (YDLCIFRTND…AGEELTFDYN (124 aa)) enclose the SET domain. 254 to 256 (RGW) serves as a coordination point for S-adenosyl-L-methionine. Residues 255–377 (GWGVRTLEKI…QVDPVDMEST (123 aa)) are mediates interaction with MECOM. An N6-acetyllysine modification is found at lysine 266. S-adenosyl-L-methionine-binding positions include tyrosine 297 and 323–324 (NH). Zn(2+) is bound at residue cysteine 326. The residue at position 391 (serine 391) is a Phosphoserine. Positions 396-412 (VRIECKCGTTACRKYLF) constitute a Post-SET domain. Zn(2+) is bound by residues cysteine 400, cysteine 402, and cysteine 407.

This sequence belongs to the class V-like SAM-binding methyltransferase superfamily. Histone-lysine methyltransferase family. Suvar3-9 subfamily. As to quaternary structure, interacts with CCAR2 and GFI1B. Component of the eNoSC complex, composed of SIRT1, SUV39H1 and RRP8. Interacts with H3 and H4 histones. Interacts with DNMT3B, CBX1, CBX4, MBD1, RUNX1, RUNX3, MYOD1, SMAD5 and RB1. Interacts with SBF1 through the SET domain. Interacts with HDAC1 and HDAC2 through the N-terminus and associates with the core histone deacetylase complex composed of HDAC1, HDAC2, RBBP4 and RBBP7. Interacts (via SET domain) with MECOM; enhances MECOM transcriptional repression activity. Interacts with LMNA; the interaction increases stability of SUV39H1. The large PER complex involved in the histone methylation is composed of at least PER2, CBX3, TRIM28, SUV39H1 and/or SUV39H2; CBX3 mediates the formation of the complex. Post-translationally, phosphorylated on serine residues, and to a lesser degree, on threonine residues. Acetylated at Lys-266, leading to inhibition of enzyme activity. SIRT1-mediated deacetylation relieves this inhibition. In terms of processing, ubiquitinated by the DCX(DCAF13) E3 ubiquitin ligase complex, leading to its degradation. As to expression, widely expressed.

The protein resides in the nucleus. It is found in the nucleus lamina. The protein localises to the nucleoplasm. It localises to the chromosome. Its subcellular location is the centromere. The catalysed reaction is L-lysyl(9)-[histone H3] + 3 S-adenosyl-L-methionine = N(6),N(6),N(6)-trimethyl-L-lysyl(9)-[histone H3] + 3 S-adenosyl-L-homocysteine + 3 H(+). Its activity is regulated as follows. Negatively regulated by CCAR2. Histone methyltransferase that specifically trimethylates 'Lys-9' of histone H3 using monomethylated H3 'Lys-9' as substrate. H3 'Lys-9' trimethylation represents a specific tag for epigenetic transcriptional repression by recruiting HP1 (CBX1, CBX3 and/or CBX5) proteins to methylated histones. Mainly functions in heterochromatin regions, thereby playing a central role in the establishment of constitutive heterochromatin at pericentric and telomere regions. H3 'Lys-9' trimethylation is also required to direct DNA methylation at pericentric repeats. SUV39H1 is targeted to histone H3 via its interaction with RB1 and is involved in many processes, such as repression of MYOD1-stimulated differentiation, regulation of the control switch for exiting the cell cycle and entering differentiation, repression by the PML-RARA fusion protein, BMP-induced repression, repression of switch recombination to IgA and regulation of telomere length. Component of the eNoSC (energy-dependent nucleolar silencing) complex, a complex that mediates silencing of rDNA in response to intracellular energy status and acts by recruiting histone-modifying enzymes. The eNoSC complex is able to sense the energy status of cell: upon glucose starvation, elevation of NAD(+)/NADP(+) ratio activates SIRT1, leading to histone H3 deacetylation followed by dimethylation of H3 at 'Lys-9' (H3K9me2) by SUV39H1 and the formation of silent chromatin in the rDNA locus. Recruited by the PER complex to the E-box elements of the circadian target genes such as PER2 itself or PER1, contributes to the conversion of local chromatin to a heterochromatin-like repressive state through H3 'Lys-9' trimethylation. This is Histone-lysine N-methyltransferase SUV39H1 (Suv39h1) from Mus musculus (Mouse).